A 124-amino-acid chain; its full sequence is MAQELDLELGLAPYDPWVLKKNLTESDLNNGFIILPKQDFEKIIRQMERGLVKNLGNGVEVKVHIIEEGPESDDYTLTLVKCRGNCMFRGGWYNMVKAKCYKPDDEIGLMWDKWSRRFLFHHIN.

Positions 18-124 form a DNA-binding region, TF-B3; it reads VLKKNLTESD…SRRFLFHHIN (107 aa).

Its subcellular location is the nucleus. This chain is Putative B3 domain-containing protein At1g51970, found in Arabidopsis thaliana (Mouse-ear cress).